The following is a 1291-amino-acid chain: Cytoplasmic FMR1-interacting protein (1291 aa).

The disordered stretch occupies residues 1269–1291; that stretch reads HPSVISSSSHYQDPQKLRQSMNN. Polar residues predominate over residues 1271 to 1291; the sequence is SVISSSSHYQDPQKLRQSMNN.

This sequence belongs to the CYFIP family. As to quaternary structure, interacts with Fmr1 and Rac1. Component of the WAVE complex composed of Hem/Kette, Scar/Wave and Cyfip where it binds through its C-terminus directly to Hem.

The protein resides in the cytoplasm. Its function is as follows. Plays a role in guidance and morphology of central and peripheral axons and in synaptic morphology. Also required for formation of cell membrane protrusions and for bristle development. The protein is Cytoplasmic FMR1-interacting protein of Drosophila pseudoobscura pseudoobscura (Fruit fly).